We begin with the raw amino-acid sequence, 440 residues long: Adenosylhomocysteinase (440 aa).

Substrate contacts are provided by T47, D123, and E148. An NAD(+)-binding site is contributed by 149 to 151 (TTT). Substrate contacts are provided by K178 and D182. NAD(+) contacts are provided by residues N183, 228–233 (GFGDVG), E251, 307–309 (IGH), and N354.

This sequence belongs to the adenosylhomocysteinase family. It depends on NAD(+) as a cofactor.

It carries out the reaction S-adenosyl-L-homocysteine + H2O = L-homocysteine + adenosine. It functions in the pathway amino-acid biosynthesis; L-homocysteine biosynthesis; L-homocysteine from S-adenosyl-L-homocysteine: step 1/1. Adenosylhomocysteine is a competitive inhibitor of S-adenosyl-L-methionine-dependent methyl transferase reactions; therefore adenosylhomocysteinase may play a key role in the control of methylations via regulation of the intracellular concentration of adenosylhomocysteine. The chain is Adenosylhomocysteinase (SAHH) from Pneumocystis carinii.